A 498-amino-acid chain; its full sequence is Calcitonin receptor (498 aa).

Residues 1 to 29 form the signal peptide; it reads MRFTLTRWCLTLFIFLNRPLPVLPDSADG. Residues 30-147 are Extracellular-facing; sequence AHTPTLEPEP…FTPDKLQNAY (118 aa). 3 cysteine pairs are disulfide-bonded: C56–C82, C73–C113, and C96–C135. 3 N-linked (GlcNAc...) asparagine glycosylation sites follow: N74, N126, and N131. A helical transmembrane segment spans residues 148-170; the sequence is ILYYLAIVGHSLSILTLLISLGI. Topologically, residues 171–198 are cytoplasmic; the sequence is FMFLRYFNLLAPFNALLYPTRSISCQRV. A helical membrane pass occupies residues 199–219; sequence TLHKNMFLTYVLNSIIIIVHL. Topologically, residues 220-236 are extracellular; that stretch reads VVIVPNGELVKRDPPIC. The cysteines at positions 236 and 306 are disulfide-linked. A helical transmembrane segment spans residues 237–259; it reads KVLHFFHQYMMSCNYFWMLCEGV. At 260–276 the chain is on the cytoplasmic side; that stretch reads YLHTLIVVSVFAEGQRL. A helical membrane pass occupies residues 277–297; that stretch reads WWYHVLGWGFPLIPTTAHAIT. Residues 298–313 are Extracellular-facing; the sequence is RAVLFNDNCWLSVDTN. A helical transmembrane segment spans residues 314–337; that stretch reads LLYIIHGPVMAALVVNFFFLLNIL. The Cytoplasmic portion of the chain corresponds to 338 to 357; it reads RVLVKKLKESQEAESHMYLK. A helical transmembrane segment spans residues 358-376; it reads AVRATLILVPLLGVQFVVL. Topologically, residues 377–384 are extracellular; that stretch reads PWRPSTPL. The helical transmembrane segment at 385 to 411 threads the bilayer; sequence LGKIYDYVVHSLIHFQGFFVAIIYCFC. Residues 412–498 are Cytoplasmic-facing; sequence NHEVQGALKR…MEVLEQETSA (87 aa).

Belongs to the G-protein coupled receptor 2 family. In terms of assembly, heterodimer of CALCR and RAMP1, RAMP2 or RAMP3; the receptor complexes function as AMYR1, AMYR2 and AMYR3 receptors, respectively, and respond to amylin/IAPP, calcitonin/CT and CGRP1 ligands. Interacts with GPRASP2.

It localises to the cell membrane. In terms of biological role, g protein-coupled receptor activated by ligand peptides amylin (IAPP), calcitonin (CT/CALCA) and calcitonin gene-related peptide type 1 (CGRP1/CALCA). CALCR interacts with receptor-activity-modifying proteins RAMP1, 2 and 3 to form receptor complexes AMYR1, 2 and 3, respectively. IAPP, CT and CGRP1 activate CALCR and AMYRs with distinct modes of receptor activation resulting in specific phenotypes. Ligand binding causes a conformation change that triggers signaling via guanine nucleotide-binding proteins (G proteins) and modulates the activity of downstream effectors. Activates cAMP-dependent pathway. In Sus scrofa (Pig), this protein is Calcitonin receptor.